The sequence spans 251 residues: Capsid protein (251 aa).

The Bipartite nuclear localization signal motif lies at 3 to 20 (KRDAPWRLMAGTSKVSRS). Residues 35-49 (KAAAWVNRPMYRKPR) carry the Nuclear localization signal motif. Residues 63-80 (CEGPCKVQSYEQRHDISH) fold into a zinc finger. Positions 96 to 117 (ITHRVGKRFCVKSVYILGKIWM) match the Nuclear export signal motif. Positions 195–242 (RRFWKVNNHVVYNHQEAGKYENHTENALLLYMACTHASNPVYATLKIR) match the Bipartite nuclear localization signal motif.

Belongs to the geminiviridae capsid protein family. As to quaternary structure, homomultimer. Binds to single-stranded and double-stranded viral DNA. Interacts (via nuclear localization signals) with host importin alpha-1a.

It localises to the virion. Its subcellular location is the host nucleus. In terms of biological role, encapsidates the viral DNA into characteristic twinned ('geminate') particles. Binds the genomic viral ssDNA and shuttles it into and out of the cell nucleus. The CP of bipartite geminiviruses is not required for cell-to-cell or systemic movement. The chain is Capsid protein from Squash leaf curl virus (SLCV).